Consider the following 188-residue polypeptide: Marginal zone B- and B1-cell-specific protein (188 aa).

The N-terminal stretch at 1–20 (MRLPLPLLLLFGCRAILGSA) is a signal peptide. Cystine bridges form between Cys49-Cys177, Cys52-Cys170, and Cys94-Cys142. Residues 185–188 (REEL) carry the Prevents secretion from ER motif.

It belongs to the MZB1 family. As to quaternary structure, part of the ER chaperone complex, a multi-protein complex in the endoplasmic reticulum containing a large number of molecular chaperones which associates with unassembled incompletely folded immunoglobulin heavy chains. Interacts with HSP90B1 and PDIA3 in a calcium-dependent manner. Forms an interchain disulfide bond with IgM monomers. Expressed predominantly in the spleen and lymph nodes. Abundantly expressed in marginal zone B and B1 cells. High expression in mesenteric adipose tissue (MAT). Expressed also in pancreas, perigonadal adipose tissue (PAT), uterus, subcutaneous adipose tissue, heart, muscle, ovary and liver. Very low expression is detected in brown adipose tissue. In PAT, significantly higher expression in stromal-vascular cell than in adipocytes. Expressed in macrophage RAW 264.7 cell line. Down-regulated in For-knockout female MAT at 5 months (obese state) followed by steep up-regulation at 9 months (prediabetic condition) when mutants progress towards the metabolic syndrome.

The protein localises to the endoplasmic reticulum. It is found in the endoplasmic reticulum lumen. It localises to the secreted. Its function is as follows. Associates with immunoglobulin M (IgM) heavy and light chains and promotes IgM assembly and secretion. May exert its effect by acting as a molecular chaperone or as an oxidoreductase as it displays a low level of oxidoreductase activity. Helps to diversify peripheral B-cell functions by regulating Ca(2+) stores, antibody secretion and integrin activation. Acts as a hormone-regulated adipokine/pro-inflammatory cytokine that is implicated in causing chronic inflammation, affecting cellular expansion and blunting insulin response in adipocytes. May have a role in the onset of insulin resistance. This chain is Marginal zone B- and B1-cell-specific protein (Mzb1), found in Mus musculus (Mouse).